The sequence spans 321 residues: Acetyl-coenzyme A carboxylase carboxyl transferase subunit beta, chloroplastic (321 aa).

One can recognise a CoA carboxyltransferase N-terminal domain in the interval 47 to 321; that stretch reads LWAQCDNCEN…FWFYVLRSSL (275 aa). Zn(2+) is bound by residues Cys51, Cys54, Cys70, and Cys73. The segment at 51-73 adopts a C4-type zinc-finger fold; the sequence is CDNCENLLYLRFLRENQSVCKEC.

It belongs to the AccD/PCCB family. As to quaternary structure, acetyl-CoA carboxylase is a heterohexamer composed of biotin carboxyl carrier protein, biotin carboxylase and 2 subunits each of ACCase subunit alpha and ACCase plastid-coded subunit beta (accD). Zn(2+) serves as cofactor.

The protein localises to the plastid. Its subcellular location is the chloroplast stroma. The catalysed reaction is N(6)-carboxybiotinyl-L-lysyl-[protein] + acetyl-CoA = N(6)-biotinyl-L-lysyl-[protein] + malonyl-CoA. Its pathway is lipid metabolism; malonyl-CoA biosynthesis; malonyl-CoA from acetyl-CoA: step 1/1. Functionally, component of the acetyl coenzyme A carboxylase (ACC) complex. Biotin carboxylase (BC) catalyzes the carboxylation of biotin on its carrier protein (BCCP) and then the CO(2) group is transferred by the transcarboxylase to acetyl-CoA to form malonyl-CoA. This chain is Acetyl-coenzyme A carboxylase carboxyl transferase subunit beta, chloroplastic, found in Pinus thunbergii (Japanese black pine).